Consider the following 143-residue polypeptide: Antiholin-like protein LrgA (143 aa).

The next 4 helical transmembrane spans lie at 6–26 (VYSF…SNII), 30–50 (LPIP…LLCL), 61–81 (LGTA…ISVI), and 97–117 (VIVV…QFIL).

The protein belongs to the CidA/LrgA family. LrgA subfamily.

The protein localises to the cell membrane. In terms of biological role, inhibits the expression or activity of extracellular murein hydrolases by interacting, possibly with LrgB, with the holin-like protein CidA. The LrgAB and CidA proteins may affect the proton motive force of the membrane. May be involved in programmed cell death (PCD), possibly triggering PCD in response to antibiotics and environmental stresses. The sequence is that of Antiholin-like protein LrgA from Bacillus cereus (strain AH820).